The chain runs to 385 residues: GTP cyclohydrolase-2 (385 aa).

A DHBP synthase-like region spans residues 1-189 (MYADAPSDSA…RDIADYRVHV (189 aa)). The GTP cyclohydrolase II stretch occupies residues 190–385 (VRTLRRVAEA…TKAERSGHMF (196 aa)). 240-244 (RLHSE) contacts GTP. Zn(2+)-binding residues include C245, C256, and C258. GTP is bound by residues Q261, 283-285 (EGR), and T305. Residue D317 is the Proton acceptor of the active site. R319 acts as the Nucleophile in catalysis. T340 and K345 together coordinate GTP.

This sequence in the N-terminal section; belongs to the DHBP synthase family. It in the C-terminal section; belongs to the GTP cyclohydrolase II family. It depends on Zn(2+) as a cofactor.

It carries out the reaction GTP + 4 H2O = 2,5-diamino-6-hydroxy-4-(5-phosphoribosylamino)-pyrimidine + formate + 2 phosphate + 3 H(+). The protein operates within cofactor biosynthesis; riboflavin biosynthesis; 5-amino-6-(D-ribitylamino)uracil from GTP: step 1/4. Catalyzes the conversion of GTP to 2,5-diamino-6-ribosylamino-4(3H)-pyrimidinone 5'-phosphate (DARP), formate and pyrophosphate. In Azospirillum brasilense, this protein is GTP cyclohydrolase-2 (ribA).